Reading from the N-terminus, the 1396-residue chain is DNA-directed RNA polymerase subunit beta' (1396 aa).

Zn(2+) is bound by residues Cys70, Cys72, Cys85, and Cys88. Positions 460, 462, and 464 each coordinate Mg(2+). Zn(2+) contacts are provided by Cys814, Cys889, Cys896, and Cys899.

This sequence belongs to the RNA polymerase beta' chain family. As to quaternary structure, the RNAP catalytic core consists of 2 alpha, 1 beta, 1 beta' and 1 omega subunit. When a sigma factor is associated with the core the holoenzyme is formed, which can initiate transcription. Requires Mg(2+) as cofactor. Zn(2+) is required as a cofactor.

It carries out the reaction RNA(n) + a ribonucleoside 5'-triphosphate = RNA(n+1) + diphosphate. DNA-dependent RNA polymerase catalyzes the transcription of DNA into RNA using the four ribonucleoside triphosphates as substrates. This is DNA-directed RNA polymerase subunit beta' from Hahella chejuensis (strain KCTC 2396).